The chain runs to 119 residues: Ribosome-binding factor A (119 aa).

This sequence belongs to the RbfA family. Monomer. Binds 30S ribosomal subunits, but not 50S ribosomal subunits or 70S ribosomes.

Its subcellular location is the cytoplasm. Functionally, one of several proteins that assist in the late maturation steps of the functional core of the 30S ribosomal subunit. Associates with free 30S ribosomal subunits (but not with 30S subunits that are part of 70S ribosomes or polysomes). Required for efficient processing of 16S rRNA. May interact with the 5'-terminal helix region of 16S rRNA. The protein is Ribosome-binding factor A of Lactococcus lactis subsp. cremoris (strain SK11).